The chain runs to 511 residues: ATP synthase subunit alpha (511 aa).

Residue 169–176 (GDRQTGKT) coordinates ATP.

The protein belongs to the ATPase alpha/beta chains family. F-type ATPases have 2 components, CF(1) - the catalytic core - and CF(0) - the membrane proton channel. CF(1) has five subunits: alpha(3), beta(3), gamma(1), delta(1), epsilon(1). CF(0) has three main subunits: a(1), b(2) and c(9-12). The alpha and beta chains form an alternating ring which encloses part of the gamma chain. CF(1) is attached to CF(0) by a central stalk formed by the gamma and epsilon chains, while a peripheral stalk is formed by the delta and b chains.

It localises to the cell inner membrane. It carries out the reaction ATP + H2O + 4 H(+)(in) = ADP + phosphate + 5 H(+)(out). In terms of biological role, produces ATP from ADP in the presence of a proton gradient across the membrane. The alpha chain is a regulatory subunit. The chain is ATP synthase subunit alpha from Bartonella quintana (strain Toulouse) (Rochalimaea quintana).